The following is a 739-amino-acid chain: Malate synthase G (739 aa).

Residues 1–18 are compositionally biased toward polar residues; sequence MTEQELLSAQTADNAGTD. The disordered stretch occupies residues 1–23; that stretch reads MTEQELLSAQTADNAGTDSTERV. Residues valine 135, 142–143, serine 292, and arginine 329 each bind acetyl-CoA; that span reads RF. The active-site Proton acceptor is arginine 356. Glyoxylate contacts are provided by residues arginine 356, glutamate 447, and 472–475; that span reads GFLD. 2 residues coordinate Mg(2+): glutamate 447 and aspartate 475. Proline 556 serves as a coordination point for acetyl-CoA. Position 633 is a cysteine sulfenic acid (-SOH) (cysteine 633). The Proton donor role is filled by aspartate 647.

The protein belongs to the malate synthase family. GlcB subfamily. In terms of assembly, monomer. Mg(2+) is required as a cofactor.

It localises to the cytoplasm. It catalyses the reaction glyoxylate + acetyl-CoA + H2O = (S)-malate + CoA + H(+). It functions in the pathway carbohydrate metabolism; glyoxylate cycle; (S)-malate from isocitrate: step 2/2. Inhibited by oxalate, glycolate and ATP. Functionally, involved in the glycolate utilization. Catalyzes the condensation and subsequent hydrolysis of acetyl-coenzyme A (acetyl-CoA) and glyoxylate to form malate and CoA. The protein is Malate synthase G of Corynebacterium glutamicum (strain ATCC 13032 / DSM 20300 / JCM 1318 / BCRC 11384 / CCUG 27702 / LMG 3730 / NBRC 12168 / NCIMB 10025 / NRRL B-2784 / 534).